Consider the following 53-residue polypeptide: Putative defensin-like protein 53 (53 aa).

4 cysteine pairs are disulfide-bonded: cysteine 12–cysteine 51, cysteine 16–cysteine 40, cysteine 26–cysteine 49, and cysteine 30–cysteine 50.

It belongs to the DEFL family.

The chain is Putative defensin-like protein 53 from Arabidopsis thaliana (Mouse-ear cress).